The sequence spans 141 residues: Hemoglobin subunit alpha-1/2 (141 aa).

The Globin domain occupies 1 to 141 (VLSPADKKNV…VSTVLTSKYR (141 aa)). Ser3 carries the phosphoserine modification. 2 positions are modified to N6-succinyllysine: Lys7 and Lys11. Residue Lys16 is modified to N6-acetyllysine; alternate. At Lys16 the chain carries N6-succinyllysine; alternate. Tyr24 carries the phosphotyrosine modification. Ser35 is modified (phosphoserine). Lys40 is subject to N6-succinyllysine. A Phosphoserine modification is found at Ser49. Position 58 (His58) interacts with O2. A heme b-binding site is contributed by His87. Ser102 carries the post-translational modification Phosphoserine. Thr108 is modified (phosphothreonine). Ser124 and Ser131 each carry phosphoserine. A phosphothreonine mark is found at Thr134 and Thr137. Residue Ser138 is modified to Phosphoserine.

It belongs to the globin family. Heterotetramer of two alpha chains and two beta chains. Red blood cells.

Involved in oxygen transport from the lung to the various peripheral tissues. This Mandrillus sphinx (Mandrill) protein is Hemoglobin subunit alpha-1/2.